Consider the following 561-residue polypeptide: Urocanate hydratase (561 aa).

NAD(+) is bound by residues 52–53 (GG), glutamine 130, 176–178 (GMG), glutamate 196, arginine 201, 242–243 (NA), 263–267 (QTSAH), 273–274 (YL), and tyrosine 322. Residue cysteine 410 is part of the active site. Glycine 492 lines the NAD(+) pocket.

The protein belongs to the urocanase family. Requires NAD(+) as cofactor.

It localises to the cytoplasm. It catalyses the reaction 4-imidazolone-5-propanoate = trans-urocanate + H2O. It functions in the pathway amino-acid degradation; L-histidine degradation into L-glutamate; N-formimidoyl-L-glutamate from L-histidine: step 2/3. Functionally, catalyzes the conversion of urocanate to 4-imidazolone-5-propionate. The polypeptide is Urocanate hydratase (Salmonella agona (strain SL483)).